Here is a 185-residue protein sequence, read N- to C-terminus: Sarcoplasmic calcium-binding proteins II, V, VI, and VII (185 aa).

EF-hand domains follow at residues 5–41, 57–92, 102–137, and 138–173; these read FQKQ…YKEV, SLED…TIAT, WCQN…FQLQ, and CADV…TSPA. Ca(2+) contacts are provided by Asp19, Asn21, Asp23, Ser25, Asp30, Asp70, Asn72, Asp74, Glu81, Asp115, Ser117, Asp119, and Glu126.

Its function is as follows. Like parvalbumins, SCPs seem to be more abundant in fast contracting muscles, but no functional relationship can be established from this distribution. This chain is Sarcoplasmic calcium-binding proteins II, V, VI, and VII, found in Branchiostoma lanceolatum (Common lancelet).